A 239-amino-acid chain; its full sequence is Ribonuclease PH (239 aa).

Residues Arg-86 and 124–126 (GTR) contribute to the phosphate site.

Belongs to the RNase PH family. Homohexameric ring arranged as a trimer of dimers.

It carries out the reaction tRNA(n+1) + phosphate = tRNA(n) + a ribonucleoside 5'-diphosphate. Functionally, phosphorolytic 3'-5' exoribonuclease that plays an important role in tRNA 3'-end maturation. Removes nucleotide residues following the 3'-CCA terminus of tRNAs; can also add nucleotides to the ends of RNA molecules by using nucleoside diphosphates as substrates, but this may not be physiologically important. Probably plays a role in initiation of 16S rRNA degradation (leading to ribosome degradation) during starvation. The sequence is that of Ribonuclease PH from Azoarcus sp. (strain BH72).